The following is a 298-amino-acid chain: Acetylglutamate kinase (298 aa).

Residues 64–65 (GG), arginine 86, and asparagine 195 contribute to the substrate site.

It belongs to the acetylglutamate kinase family. ArgB subfamily.

The protein localises to the cytoplasm. The enzyme catalyses N-acetyl-L-glutamate + ATP = N-acetyl-L-glutamyl 5-phosphate + ADP. It functions in the pathway amino-acid biosynthesis; L-arginine biosynthesis; N(2)-acetyl-L-ornithine from L-glutamate: step 2/4. In terms of biological role, catalyzes the ATP-dependent phosphorylation of N-acetyl-L-glutamate. The sequence is that of Acetylglutamate kinase from Aquifex aeolicus (strain VF5).